The following is a 99-amino-acid chain: uncharacterized protein (99 aa).

It is found in the mitochondrion. This is an uncharacterized protein from Marchantia polymorpha (Common liverwort).